Reading from the N-terminus, the 221-residue chain is Peptide methionine sulfoxide reductase MsrA (221 aa).

Cys-54 is an active-site residue.

The protein belongs to the MsrA Met sulfoxide reductase family.

The catalysed reaction is L-methionyl-[protein] + [thioredoxin]-disulfide + H2O = L-methionyl-(S)-S-oxide-[protein] + [thioredoxin]-dithiol. It catalyses the reaction [thioredoxin]-disulfide + L-methionine + H2O = L-methionine (S)-S-oxide + [thioredoxin]-dithiol. In terms of biological role, has an important function as a repair enzyme for proteins that have been inactivated by oxidation. Catalyzes the reversible oxidation-reduction of methionine sulfoxide in proteins to methionine. The polypeptide is Peptide methionine sulfoxide reductase MsrA (Methylobacterium nodulans (strain LMG 21967 / CNCM I-2342 / ORS 2060)).